A 205-amino-acid chain; its full sequence is Holliday junction branch migration complex subunit RuvA (205 aa).

Residues 1–64 are domain I; it reads MIGKLKGVVD…EDQIRLFGFS (64 aa). The interval 65–143 is domain II; sequence SAAERDWFRL…GFSASEPLAA (79 aa). The flexible linker stretch occupies residues 144-152; sequence QLGGGGVAS. The domain III stretch occupies residues 153–205; sequence AQGGAAADAVSALVNLGYGVPQANAAIAAALRGAGEGAKTEVLIRLGLKELAK.

This sequence belongs to the RuvA family. As to quaternary structure, homotetramer. Forms an RuvA(8)-RuvB(12)-Holliday junction (HJ) complex. HJ DNA is sandwiched between 2 RuvA tetramers; dsDNA enters through RuvA and exits via RuvB. An RuvB hexamer assembles on each DNA strand where it exits the tetramer. Each RuvB hexamer is contacted by two RuvA subunits (via domain III) on 2 adjacent RuvB subunits; this complex drives branch migration. In the full resolvosome a probable DNA-RuvA(4)-RuvB(12)-RuvC(2) complex forms which resolves the HJ.

Its subcellular location is the cytoplasm. Functionally, the RuvA-RuvB-RuvC complex processes Holliday junction (HJ) DNA during genetic recombination and DNA repair, while the RuvA-RuvB complex plays an important role in the rescue of blocked DNA replication forks via replication fork reversal (RFR). RuvA specifically binds to HJ cruciform DNA, conferring on it an open structure. The RuvB hexamer acts as an ATP-dependent pump, pulling dsDNA into and through the RuvAB complex. HJ branch migration allows RuvC to scan DNA until it finds its consensus sequence, where it cleaves and resolves the cruciform DNA. The polypeptide is Holliday junction branch migration complex subunit RuvA (Xanthobacter autotrophicus (strain ATCC BAA-1158 / Py2)).